The primary structure comprises 516 residues: 4-hydroxybenzoate brominase (decarboxylating) (516 aa).

Residues Ser-13, Glu-32, Val-40, Phe-41, His-51, Val-102, and Gln-365 each contribute to the FAD site.

Belongs to the FMO family. FAD is required as a cofactor.

The catalysed reaction is 2 bromide + 4-hydroxybenzoate + 2 NADPH + 2 O2 + 5 H(+) = 2,4-dibromophenol + CO2 + 2 NADP(+) + 4 H2O. It carries out the reaction bromide + 4-hydroxybenzoate + NADPH + O2 + 2 H(+) = 3-bromo-4-hydroxybenzoate + NADP(+) + 2 H2O. It catalyses the reaction 3-bromo-4-hydroxybenzoate + bromide + NADPH + O2 + 3 H(+) = 2,4-dibromophenol + CO2 + NADP(+) + 2 H2O. The enzyme catalyses 3,4-dihydroxybenzoate + 2 bromide + 2 NADPH + 2 O2 + 5 H(+) = 3,5-dibromobenzene-1,2-diol + CO2 + 2 NADP(+) + 4 H2O. The catalysed reaction is 3,4-dihydroxybenzoate + bromide + NADPH + O2 + 2 H(+) = 3-bromo-4,5-dihydroxybenzoate + NADP(+) + 2 H2O. It carries out the reaction 3-bromo-4,5-dihydroxybenzoate + bromide + NADPH + O2 + 3 H(+) = 3,5-dibromobenzene-1,2-diol + CO2 + NADP(+) + 2 H2O. In terms of biological role, brominase involved in the biosynthesis of polybrominated aromatic organic compounds. Catalyzes the bromination of 4-hydroxybenzoate (4-HBA) to 3-bromo-4-hydroxybenzoate, followed by bromination and decarboxylation of 3-bromo-4-hydroxybenzoate to 2,4-dibromophenol. Can also use 3,4-dihydroxybenzoate, with lower efficiency, forming 3-bromo-4,5-dihydroxybenzoate and 3,5-dibromobenzene-1,2-diol. This is 4-hydroxybenzoate brominase (decarboxylating) from Marinomonas mediterranea (strain ATCC 700492 / JCM 21426 / NBRC 103028 / MMB-1).